The sequence spans 414 residues: Protein FAM81B (414 aa).

Positions 1–13 (MTSETDINKSASP) are enriched in polar residues. The tract at residues 1–43 (MTSETDINKSASPTAAAKEQPEEPDGPLPGSASEQEKKVRFSP) is disordered. Coiled-coil stretches lie at residues 70–94 (NTQRSQLEDRLNNQDRTIAFLLEQA), 121–149 (LLENHIQTITSIVKKLSQNIEMIEEQIKA), 188–223 (KLSGDIHFIRNEHQQLEKTIQEMISSLQTVSKNLDT), and 266–414 (LNLY…LQES).

It belongs to the FAM81 family.

The protein is Protein FAM81B (FAM81B) of Bos taurus (Bovine).